The primary structure comprises 98 residues: NADH-ubiquinone oxidoreductase chain 4L (98 aa).

The next 3 membrane-spanning stretches (helical) occupy residues 1–21 (MSMVYINIFLAFILSLMGMLV), 29–49 (SLLCLEGMMLSLFVMMSVTIL), and 61–81 (IVLLVFAACEAALGLSLLVMV).

This sequence belongs to the complex I subunit 4L family. Core subunit of respiratory chain NADH dehydrogenase (Complex I) which is composed of 45 different subunits.

The protein resides in the mitochondrion inner membrane. The enzyme catalyses a ubiquinone + NADH + 5 H(+)(in) = a ubiquinol + NAD(+) + 4 H(+)(out). In terms of biological role, core subunit of the mitochondrial membrane respiratory chain NADH dehydrogenase (Complex I) which catalyzes electron transfer from NADH through the respiratory chain, using ubiquinone as an electron acceptor. Part of the enzyme membrane arm which is embedded in the lipid bilayer and involved in proton translocation. This Canis latrans (Coyote) protein is NADH-ubiquinone oxidoreductase chain 4L (MT-ND4L).